The chain runs to 864 residues: Paramyosin (864 aa).

Residues M1–P30 are nonhelical region. A coiled-coil region spans residues S31–S853. A nonhelical region region spans residues V854–V864.

This sequence belongs to the paramyosin family. As to quaternary structure, homodimer. Post-translationally, phosphorylated. In terms of tissue distribution, most abundantly expressed in muscle tissues from byssus retractor and adductor muscles. Low expression in foot, gill, inner mantle and outer mantle.

It localises to the cytoplasm. The protein localises to the myofibril. Its function is as follows. Paramyosin is a major structural component of many thick filaments isolated from invertebrate muscles. The protein is Paramyosin of Mytilus galloprovincialis (Mediterranean mussel).